A 407-amino-acid polypeptide reads, in one-letter code: Elongation factor Tu, chloroplastic (407 aa).

One can recognise a tr-type G domain in the interval 10–212; that stretch reads KPHVNIGTIG…SVDNYIPAPE (203 aa). Residues 19–26 form a G1 region; the sequence is GHVDHGKT. 19 to 26 provides a ligand contact to GTP; sequence GHVDHGKT. Mg(2+) is bound at residue T26. The G2 stretch occupies residues 59-63; that stretch reads GITIN. The segment at 80 to 83 is G3; that stretch reads DCPG. GTP is bound by residues 80–84 and 135–138; these read DCPGH and NKAD. Residues 135-138 form a G4 region; it reads NKAD. A G5 region spans residues 173–175; it reads SAL.

Belongs to the TRAFAC class translation factor GTPase superfamily. Classic translation factor GTPase family. EF-Tu/EF-1A subfamily.

Its subcellular location is the plastid. It localises to the chloroplast. It carries out the reaction GTP + H2O = GDP + phosphate + H(+). GTP hydrolase that promotes the GTP-dependent binding of aminoacyl-tRNA to the A-site of ribosomes during protein biosynthesis. In Emiliania huxleyi (Coccolithophore), this protein is Elongation factor Tu, chloroplastic (tufA).